The sequence spans 145 residues: Cell division protein SepF (145 aa).

It belongs to the SepF family. As to quaternary structure, homodimer. Interacts with FtsZ.

It localises to the cytoplasm. Its function is as follows. Cell division protein that is part of the divisome complex and is recruited early to the Z-ring. Probably stimulates Z-ring formation, perhaps through the cross-linking of FtsZ protofilaments. Its function overlaps with FtsA. The protein is Cell division protein SepF of Lactobacillus helveticus (strain DPC 4571).